A 271-amino-acid chain; its full sequence is Mannosyl-3-phosphoglycerate phosphatase (271 aa).

The active-site Nucleophile is D13. Mg(2+) contacts are provided by D13, D15, and D214.

This sequence belongs to the HAD-like hydrolase superfamily. MPGP family. Mg(2+) serves as cofactor.

The protein localises to the cytoplasm. The enzyme catalyses 2-O-(alpha-D-mannosyl)-3-phosphoglycerate + H2O = (2R)-2-O-(alpha-D-mannosyl)-glycerate + phosphate. The protein is Mannosyl-3-phosphoglycerate phosphatase of Escherichia coli O45:K1 (strain S88 / ExPEC).